Consider the following 32-residue polypeptide: Alpha-2-macroglobulin homolog (32 aa).

The isoglutamyl cysteine thioester (Cys-Gln) cross-link spans C16 to Q19.

Belongs to the protease inhibitor I39 (alpha-2-macroglobulin) family. Homodimer; disulfide-linked.

The protein resides in the secreted. Functionally, is able to inhibit all four classes of proteinases by a unique 'trapping' mechanism. This protein has a peptide stretch, called the 'bait region' which contains specific cleavage sites for different proteinases. When a proteinase cleaves the bait region, a conformational change is induced in the protein which traps the proteinase. The entrapped enzyme remains active against low molecular weight substrates (activity against high molecular weight substrates is greatly reduced). Following cleavage in the bait region a thioester bond is hydrolyzed and mediates the covalent binding of the protein to the proteinase. The chain is Alpha-2-macroglobulin homolog from Pacifastacus leniusculus (Signal crayfish).